We begin with the raw amino-acid sequence, 347 residues long: Druantia protein DruD (347 aa).

Its subcellular location is the cytoplasm. In terms of biological role, component of antiviral defense system Druantia type I, composed of DruA, DruB, DruC, DruD and DruE. Expression of Druantia in E.coli (strain MG1655) confers resistance to phage lambda, SECphi18, SECphi27 and T4. The sequence is that of Druantia protein DruD from Escherichia coli (strain UMEA 4076-1).